A 155-amino-acid chain; its full sequence is Small ribosomal subunit protein uS7c (155 aa).

It belongs to the universal ribosomal protein uS7 family. As to quaternary structure, part of the 30S ribosomal subunit.

Its subcellular location is the plastid. The protein localises to the chloroplast. One of the primary rRNA binding proteins, it binds directly to 16S rRNA where it nucleates assembly of the head domain of the 30S subunit. In Aristolochia macrophylla (Dutchman's pipe vine), this protein is Small ribosomal subunit protein uS7c (rps7).